Here is a 431-residue protein sequence, read N- to C-terminus: 3-phosphoshikimate 1-carboxyvinyltransferase (431 aa).

The 3-phosphoshikimate site is built by Lys21, Ser22, and Arg26. Lys21 lines the phosphoenolpyruvate pocket. Phosphoenolpyruvate is bound by residues Gly94 and Arg122. 4 residues coordinate 3-phosphoshikimate: Ser167, Gln169, Asp315, and Lys342. Gln169 provides a ligand contact to phosphoenolpyruvate. Catalysis depends on Asp315, which acts as the Proton acceptor. Residues Arg346 and Arg388 each contribute to the phosphoenolpyruvate site.

It belongs to the EPSP synthase family. Monomer.

It localises to the cytoplasm. It carries out the reaction 3-phosphoshikimate + phosphoenolpyruvate = 5-O-(1-carboxyvinyl)-3-phosphoshikimate + phosphate. It functions in the pathway metabolic intermediate biosynthesis; chorismate biosynthesis; chorismate from D-erythrose 4-phosphate and phosphoenolpyruvate: step 6/7. In terms of biological role, catalyzes the transfer of the enolpyruvyl moiety of phosphoenolpyruvate (PEP) to the 5-hydroxyl of shikimate-3-phosphate (S3P) to produce enolpyruvyl shikimate-3-phosphate and inorganic phosphate. In Pelotomaculum thermopropionicum (strain DSM 13744 / JCM 10971 / SI), this protein is 3-phosphoshikimate 1-carboxyvinyltransferase.